The sequence spans 427 residues: 3-phosphoshikimate 1-carboxyvinyltransferase (427 aa).

3 residues coordinate 3-phosphoshikimate: Lys22, Ser23, and Arg27. Lys22 is a phosphoenolpyruvate binding site. Positions 96 and 124 each coordinate phosphoenolpyruvate. Ser169, Ser170, Gln171, Ser197, Asp313, Asn336, and Lys340 together coordinate 3-phosphoshikimate. Gln171 contacts phosphoenolpyruvate. Asp313 serves as the catalytic Proton acceptor. Phosphoenolpyruvate is bound by residues Arg344, Arg386, and Lys411.

This sequence belongs to the EPSP synthase family. As to quaternary structure, monomer.

Its subcellular location is the cytoplasm. It catalyses the reaction 3-phosphoshikimate + phosphoenolpyruvate = 5-O-(1-carboxyvinyl)-3-phosphoshikimate + phosphate. The protein operates within metabolic intermediate biosynthesis; chorismate biosynthesis; chorismate from D-erythrose 4-phosphate and phosphoenolpyruvate: step 6/7. Catalyzes the transfer of the enolpyruvyl moiety of phosphoenolpyruvate (PEP) to the 5-hydroxyl of shikimate-3-phosphate (S3P) to produce enolpyruvyl shikimate-3-phosphate and inorganic phosphate. The protein is 3-phosphoshikimate 1-carboxyvinyltransferase of Salmonella paratyphi A (strain ATCC 9150 / SARB42).